We begin with the raw amino-acid sequence, 117 residues long: uncharacterized protein (117 aa).

Residues 76–96 (FIMSSGCFLIASLSCVGLTVF) traverse the membrane as a helical segment.

The protein resides in the membrane. This is an uncharacterized protein from Saccharomyces cerevisiae (strain ATCC 204508 / S288c) (Baker's yeast).